The primary structure comprises 1041 residues: DNA polymerase catalytic subunit (1041 aa).

The interval 1-23 is disordered; the sequence is MAFFNPYFKSKNKGSDMPPKQSM.

Belongs to the DNA polymerase type-B family.

The protein resides in the host nucleus. The catalysed reaction is DNA(n) + a 2'-deoxyribonucleoside 5'-triphosphate = DNA(n+1) + diphosphate. It catalyses the reaction Endonucleolytic cleavage to 5'-phosphomonoester.. Functionally, replicates viral genomic DNA. The replication complex is composed of six viral proteins: the DNA polymerase, processivity factor, primase, primase-associated factor, helicase, and ssDNA-binding protein. Additionally, the polymerase contains an intrinsic ribonuclease H (RNase H) activity that specifically degrades RNA/DNA heteroduplexes or duplex DNA substrates in the 5' to 3' direction. Therefore, it can catalyze the excision of the RNA primers that initiate the synthesis of Okazaki fragments at a replication fork during viral DNA replication. The chain is DNA polymerase catalytic subunit from Elephantid herpesvirus 1 (isolate Asian elephant/Berlin/Kiba/1998) (EIHV-1).